Here is a 392-residue protein sequence, read N- to C-terminus: O-phospho-L-seryl-tRNA:Cys-tRNA synthase 1 (392 aa).

Pyridoxal 5'-phosphate-binding positions include Ala85 to Arg86, Asn190, and Ser213 to His215. At Lys216 the chain carries N6-(pyridoxal phosphate)lysine.

It belongs to the SepCysS family. In terms of assembly, homodimer. Interacts with SepRS. Pyridoxal 5'-phosphate serves as cofactor.

It catalyses the reaction O-phospho-L-seryl-tRNA(Cys) + hydrogen sulfide + H(+) = L-cysteinyl-tRNA(Cys) + phosphate. In terms of biological role, converts O-phospho-L-seryl-tRNA(Cys) (Sep-tRNA(Cys)) to L-cysteinyl-tRNA(Cys) (Cys-tRNA(Cys)). In Methanocorpusculum labreanum (strain ATCC 43576 / DSM 4855 / Z), this protein is O-phospho-L-seryl-tRNA:Cys-tRNA synthase 1.